The primary structure comprises 234 residues: UPF0502 protein Bphyt_5265 (234 aa).

This sequence belongs to the UPF0502 family.

In Paraburkholderia phytofirmans (strain DSM 17436 / LMG 22146 / PsJN) (Burkholderia phytofirmans), this protein is UPF0502 protein Bphyt_5265.